The chain runs to 403 residues: Presqualene diphosphate synthase (403 aa).

Positions 84, 87, and 88 each coordinate Mg(2+).

It belongs to the phytoene/squalene synthase family. Mg(2+) serves as cofactor.

The enzyme catalyses 2 (2E,6E)-farnesyl diphosphate = presqualene diphosphate + diphosphate. Functionally, catalyzes the biosynthesis of presqualene diphosphate (PSPP). Works in combination with SSL-2 or SSL-3 to produce respectively squalene or botryococcene. In most other species, farnesyl diphosphate (FPP) is converted into squalene in a two-step reaction by a single enzyme. The protein is Presqualene diphosphate synthase (SSL-1) of Botryococcus braunii (Green alga).